The sequence spans 214 residues: Large ribosomal subunit protein bL25 (214 aa).

This sequence belongs to the bacterial ribosomal protein bL25 family. CTC subfamily. As to quaternary structure, part of the 50S ribosomal subunit; part of the 5S rRNA/L5/L18/L25 subcomplex. Contacts the 5S rRNA. Binds to the 5S rRNA independently of L5 and L18.

This is one of the proteins that binds to the 5S RNA in the ribosome where it forms part of the central protuberance. This is Large ribosomal subunit protein bL25 from Polynucleobacter necessarius subsp. necessarius (strain STIR1).